An 879-amino-acid chain; its full sequence is MKMLTRLQVLTLALFSKGFLLSLGDHNFLRREIKIEGDLVLGGLFPINEKGTGTEECGRINEDRGIQRLEAMLFAIDEINKDDYLLPGVKLGVHILDTCSRDTYALEQSLEFVRASLTKVDEAEYMCPDGSYAIQENIPLLIAGVIGGSYSSVSIQVANLLRLFQIPQISYASTSAKLSDKSRYDYFARTVPPDFYQAKAMAEILRFFNWTYVSTVASEGDYGETGIEAFEQEARLRNICIATAEKVGRSNIRKSYDSVIRELLQKPNARVVVLFMRSDDSRELIAAASRANASFTWVASDGWGAQESIIKGSEHVAYGAITLELASQPVRQFDRYFQSLNPYNNHRNPWFRDFWEQKFQCSLQNKRNHRRVCDKHLAIDSSNYEQESKIMFVVNAVYAMAHALHKMQRTLCPNTTKLCDAMKILDGKKLYKDYLLKINFTAPFNPNKDADSIVKFDTFGDGMGRYNVFNFQNVGGKYSYLKVGHWAETLSLDVNSIHWSRNSVPTSQCSDPCAPNEMKNMQPGDVCCWICIPCEPYEYLADEFTCMDCGSGQWPTADLTGCYDLPEDYIRWEDAWAIGPVTIACLGFMCTCMVVTVFIKHNNTPLVKASGRELCYILLFGVGLSYCMTFFFIAKPSPVICALRRLGLGSSFAICYSALLTKTNCIARIFDGVKNGAQRPKFISPSSQVFICLGLILVQIVMVSVWLILEAPGTRRYTLAEKRETVILKCNVKDSSMLISLTYDVILVILCTVYAFKTRKCPENFNEAKFIGFTMYTTCIIWLAFLPIFYVTSSDYRVQTTTMCISVSLSGFVVLGCLFAPKVHIILFQPQKNVVTHRLHLNRFSVSGTGTTYSQSSASTYVPTVCNGREVLDSTTSSL.

A signal peptide spans 1 to 22; that stretch reads MKMLTRLQVLTLALFSKGFLLS. At 23–576 the chain is on the extracellular side; sequence LGDHNFLRRE…EDYIRWEDAW (554 aa). A disulfide bond links Cys57 and Cys99. L-glutamate-binding positions include Ser151 and 172–174; that span reads AST. Asn209 is a glycosylation site (N-linked (GlcNAc...) asparagine). Residue Tyr222 participates in L-glutamate binding. Cystine bridges form between Cys240–Cys527, Cys361–Cys373, Cys412–Cys419, Cys509–Cys528, Cys513–Cys531, Cys534–Cys546, and Cys549–Cys562. N-linked (GlcNAc...) asparagine glycosylation is present at Asn292. Residue Asp301 participates in L-glutamate binding. Lys389 lines the L-glutamate pocket. Residues Asn414 and Asn439 are each glycosylated (N-linked (GlcNAc...) asparagine). Residues 577 to 599 form a helical membrane-spanning segment; it reads AIGPVTIACLGFMCTCMVVTVFI. At 600-613 the chain is on the cytoplasmic side; it reads KHNNTPLVKASGRE. The helical transmembrane segment at 614–634 threads the bilayer; it reads LCYILLFGVGLSYCMTFFFIA. Over 635-645 the chain is Extracellular; the sequence is KPSPVICALRR. Residues 646–664 form a helical membrane-spanning segment; it reads LGLGSSFAICYSALLTKTN. The Cytoplasmic portion of the chain corresponds to 665–688; the sequence is CIARIFDGVKNGAQRPKFISPSSQ. Residues 689–709 traverse the membrane as a helical segment; it reads VFICLGLILVQIVMVSVWLIL. Topologically, residues 710-734 are extracellular; sequence EAPGTRRYTLAEKRETVILKCNVKD. A helical membrane pass occupies residues 735–756; it reads SSMLISLTYDVILVILCTVYAF. Residues 757–769 are Cytoplasmic-facing; the sequence is KTRKCPENFNEAK. The chain crosses the membrane as a helical span at residues 770 to 792; it reads FIGFTMYTTCIIWLAFLPIFYVT. Topologically, residues 793–802 are extracellular; the sequence is SSDYRVQTTT. Residues 803–828 traverse the membrane as a helical segment; the sequence is MCISVSLSGFVVLGCLFAPKVHIILF. Over 829 to 879 the chain is Cytoplasmic; the sequence is QPQKNVVTHRLHLNRFSVSGTGTTYSQSSASTYVPTVCNGREVLDSTTSSL.

Belongs to the G-protein coupled receptor 3 family. Interacts with TAMALIN. In terms of tissue distribution, detected in brain cortex, thalamus, subthalamic nucleus, substantia nigra, hypothalamus, hippocampus, corpus callosum, caudate nucleus and amygdala.

The protein resides in the cell membrane. In terms of biological role, G-protein coupled receptor for glutamate. Ligand binding causes a conformation change that triggers signaling via guanine nucleotide-binding proteins (G proteins) and modulates the activity of down-stream effectors. Signaling inhibits adenylate cyclase activity. The polypeptide is Metabotropic glutamate receptor 3 (GRM3) (Homo sapiens (Human)).